Consider the following 478-residue polypeptide: Phosphomannomutase (478 aa).

A helical transmembrane segment spans residues 30 to 46; sequence FTPEVCARFTISFLTVM. The active-site Phosphoserine intermediate is the Ser-111. Residues Ser-111, Asp-245, Asp-247, and Asp-249 each coordinate Mg(2+). The chain crosses the membrane as a helical span at residues 265-284; the sequence is ILGLLCSLELAADAVAIPVS.

It belongs to the phosphohexose mutase family. Requires Mg(2+) as cofactor.

The protein localises to the cell membrane. The catalysed reaction is alpha-D-mannose 1-phosphate = D-mannose 6-phosphate. It functions in the pathway nucleotide-sugar biosynthesis; GDP-alpha-D-mannose biosynthesis; alpha-D-mannose 1-phosphate from D-fructose 6-phosphate: step 2/2. The protein operates within bacterial outer membrane biogenesis; LPS O-antigen biosynthesis. Its function is as follows. Involved in GDP-mannose biosynthesis which serves as the activated sugar nucleotide precursor for mannose residues in cell surface polysaccharides. This enzyme participates in synthesis of the LPS group C2 O antigen. The polypeptide is Phosphomannomutase (manB) (Salmonella muenchen).